Reading from the N-terminus, the 102-residue chain is Small ribosomal subunit protein uS10 (102 aa).

The protein belongs to the universal ribosomal protein uS10 family. Part of the 30S ribosomal subunit.

Its function is as follows. Involved in the binding of tRNA to the ribosomes. The protein is Small ribosomal subunit protein uS10 of Clostridium perfringens (strain ATCC 13124 / DSM 756 / JCM 1290 / NCIMB 6125 / NCTC 8237 / Type A).